The primary structure comprises 151 residues: Large ribosomal subunit protein bL9 (151 aa).

This sequence belongs to the bacterial ribosomal protein bL9 family.

Functionally, binds to the 23S rRNA. The sequence is that of Large ribosomal subunit protein bL9 from Prochlorococcus marinus (strain MIT 9215).